Consider the following 691-residue polypeptide: Elongation factor G (691 aa).

Positions 8-282 constitute a tr-type G domain; that stretch reads ERVRNIGIAA…AVVNYLPAPV (275 aa). GTP-binding positions include 17–24, 81–85, and 135–138; these read AHIDAGKT, DTPGH, and NKMD.

Belongs to the TRAFAC class translation factor GTPase superfamily. Classic translation factor GTPase family. EF-G/EF-2 subfamily.

It is found in the cytoplasm. Functionally, catalyzes the GTP-dependent ribosomal translocation step during translation elongation. During this step, the ribosome changes from the pre-translocational (PRE) to the post-translocational (POST) state as the newly formed A-site-bound peptidyl-tRNA and P-site-bound deacylated tRNA move to the P and E sites, respectively. Catalyzes the coordinated movement of the two tRNA molecules, the mRNA and conformational changes in the ribosome. In Prochlorococcus marinus (strain NATL1A), this protein is Elongation factor G.